A 170-amino-acid polypeptide reads, in one-letter code: Photosystem I assembly protein Ycf3 (170 aa).

TPR repeat units lie at residues 35–69 (AFTYYRDGVMSAQSEGEYAEALQNYYEAMRPEIDP), 73–106 (SYILYNIGLIHMSNGEHTEALEYYFQALKRNPSL), and 121–154 (GEQAIRQGDPETAEAWSDRAAEYWKQAIALAPGN).

The protein belongs to the Ycf3 family.

It localises to the plastid. Its subcellular location is the chloroplast thylakoid membrane. Functionally, essential for the assembly of the photosystem I (PSI) complex. May act as a chaperone-like factor to guide the assembly of the PSI subunits. The sequence is that of Photosystem I assembly protein Ycf3 from Cycas taitungensis (Prince sago).